A 426-amino-acid chain; its full sequence is Glutamate-1-semialdehyde 2,1-aminomutase (426 aa).

Lys265 bears the N6-(pyridoxal phosphate)lysine mark.

Belongs to the class-III pyridoxal-phosphate-dependent aminotransferase family. HemL subfamily. As to quaternary structure, homodimer. The cofactor is pyridoxal 5'-phosphate.

The protein resides in the cytoplasm. The catalysed reaction is (S)-4-amino-5-oxopentanoate = 5-aminolevulinate. It participates in porphyrin-containing compound metabolism; protoporphyrin-IX biosynthesis; 5-aminolevulinate from L-glutamyl-tRNA(Glu): step 2/2. The protein is Glutamate-1-semialdehyde 2,1-aminomutase of Aliarcobacter butzleri (strain RM4018) (Arcobacter butzleri).